Here is a 534-residue protein sequence, read N- to C-terminus: CTP synthase (534 aa).

Residues Met1–Leu267 are amidoligase domain. Ser13 contributes to the CTP binding site. Residue Ser13 coordinates UTP. Ser14–Ile19 contributes to the ATP binding site. An L-glutamine-binding site is contributed by Tyr54. ATP is bound at residue Asp71. Mg(2+)-binding residues include Asp71 and Glu141. Residues Asp148–Glu150, Lys188–Gln193, and Lys224 each bind CTP. Residues Lys188 to Gln193 and Lys224 contribute to the UTP site. Positions Lys292–Lys534 constitute a Glutamine amidotransferase type-1 domain. Gly354 contributes to the L-glutamine binding site. The Nucleophile; for glutamine hydrolysis role is filled by Cys381. Residues Leu382 to Gln385, Glu405, and Arg463 contribute to the L-glutamine site. Active-site residues include His508 and Glu510.

Belongs to the CTP synthase family. In terms of assembly, homotetramer.

It carries out the reaction UTP + L-glutamine + ATP + H2O = CTP + L-glutamate + ADP + phosphate + 2 H(+). It catalyses the reaction L-glutamine + H2O = L-glutamate + NH4(+). The enzyme catalyses UTP + NH4(+) + ATP = CTP + ADP + phosphate + 2 H(+). The protein operates within pyrimidine metabolism; CTP biosynthesis via de novo pathway; CTP from UDP: step 2/2. Allosterically activated by GTP, when glutamine is the substrate; GTP has no effect on the reaction when ammonia is the substrate. The allosteric effector GTP functions by stabilizing the protein conformation that binds the tetrahedral intermediate(s) formed during glutamine hydrolysis. Inhibited by the product CTP, via allosteric rather than competitive inhibition. In terms of biological role, catalyzes the ATP-dependent amination of UTP to CTP with either L-glutamine or ammonia as the source of nitrogen. Regulates intracellular CTP levels through interactions with the four ribonucleotide triphosphates. This chain is CTP synthase, found in Streptococcus agalactiae serotype Ia (strain ATCC 27591 / A909 / CDC SS700).